A 319-amino-acid chain; its full sequence is Acetyl esterase (319 aa).

Residues 91–93 (HGG) carry the Involved in the stabilization of the negatively charged intermediate by the formation of the oxyanion hole motif. Active-site residues include S165, D262, and H292.

The protein belongs to the 'GDXG' lipolytic enzyme family. In terms of assembly, homodimer. Interacts with MalT and MelA.

It localises to the cytoplasm. In terms of biological role, displays esterase activity towards short chain fatty esters (acyl chain length of up to 8 carbons). Able to hydrolyze triacetylglycerol (triacetin) and tributyrylglycerol (tributyrin), but not trioleylglycerol (triolein) or cholesterol oleate. Negatively regulates MalT activity by antagonizing maltotriose binding. Inhibits MelA galactosidase activity. The polypeptide is Acetyl esterase (Escherichia coli O8 (strain IAI1)).